The following is a 178-amino-acid chain: MSRVGKKPIPIPAKTKVTVSNGTVTVQGEKGKLERPLHPDVELKIEGDEITVVPVVERRKITAVQGLVRSLVANMVTGVSTGFKRVLEVNGIGYKAELNGQTLNLTLGFSHPVDFPLPQGITAEVDKKNNITLEGIDNELLGQTAASIRALRPPEPYKGKGIKYAEERIIRKAGKTGA.

It belongs to the universal ribosomal protein uL6 family. Part of the 50S ribosomal subunit.

In terms of biological role, this protein binds to the 23S rRNA, and is important in its secondary structure. It is located near the subunit interface in the base of the L7/L12 stalk, and near the tRNA binding site of the peptidyltransferase center. The chain is Large ribosomal subunit protein uL6 from Desulfatibacillum aliphaticivorans.